The primary structure comprises 856 residues: Dual specificity protein kinase TTK (856 aa).

Met1 bears the N-acetylmethionine mark. Thr32 carries the phosphothreonine modification. Phosphoserine occurs at positions 36, 277, and 342. Thr380 bears the Phosphothreonine mark. Phosphoserine occurs at positions 383, 435, and 454. The 267-residue stretch at 524 to 790 (YSILKQIGSG…IPELLTHPYV (267 aa)) folds into the Protein kinase domain. ATP is bound by residues 530 to 538 (IGSGGSSKV) and Lys552. Residue Asp646 is the Proton acceptor of the active site. Ser820 is modified (phosphoserine). Positions 837 to 856 (CGEGQDSSSSKTFDKKRERK) are disordered.

The protein belongs to the protein kinase superfamily. Ser/Thr protein kinase family. Interacts with TPR; the interactions occurs in a microtubule-independent manner. Interacts with MAD1L1 and MAD2L1. Autophosphorylated. In terms of tissue distribution, present in rapidly proliferating cell lines; high levels in testis, bone marrow, spleen and thymus. Low levels in brain, heart, lung and kidney.

The enzyme catalyses L-seryl-[protein] + ATP = O-phospho-L-seryl-[protein] + ADP + H(+). It catalyses the reaction L-threonyl-[protein] + ATP = O-phospho-L-threonyl-[protein] + ADP + H(+). The catalysed reaction is L-tyrosyl-[protein] + ATP = O-phospho-L-tyrosyl-[protein] + ADP + H(+). Its activity is regulated as follows. Inhibited by the ATP-competitive kinase inhibitor, SP600125. In terms of biological role, involved in mitotic spindle assembly checkpoint signaling, a process that delays anaphase until chromosomes are bioriented on the spindle, and in the repair of incorrect mitotic kinetochore-spindle microtubule attachments. Phosphorylates MAD1L1 to promote the mitotic spindle assembly checkpoint. Phosphorylates CDCA8/Borealin leading to enhanced AURKB activity at the kinetochore. Phosphorylates SKA3 at 'Ser-34' leading to dissociation of the SKA complex from microtubules and destabilization of microtubule-kinetochore attachments. Phosphorylates KNL1, KNTC1 and autophosphorylates. Phosphorylates MCRS1 which enhances recruitment of KIF2A to the minus end of spindle microtubules and promotes chromosome alignment. The protein is Dual specificity protein kinase TTK (Ttk) of Mus musculus (Mouse).